The primary structure comprises 745 residues: Probable xyloglucan glycosyltransferase 3 (745 aa).

2 helical membrane-spanning segments follow: residues 116–136 (GFLL…LKGW) and 196–216 (IDYI…LFMV). Residue D300 is part of the active site. Positions 359 and 361 each coordinate substrate. D453 is an active-site residue. 4 helical membrane-spanning segments follow: residues 531–551 (LILP…TMFV), 556–576 (LPIW…ILPA), 695–715 (IFKK…RSLL), and 720–740 (LHFY…LDLI).

It belongs to the glycosyltransferase 2 family. Plant cellulose synthase-like C subfamily.

Its subcellular location is the golgi apparatus membrane. Its function is as follows. Probable beta-1,4-glucan synthase rather involved in the synthesis of the xyloglucan backbone than cellulose. Seems to work simultaneously with xyloglucan 6-xylosyltransferase. Xyloglucan is a noncellulosic polysaccharides of plant cell wall and consists of a glucan backbone substituted by xylose, galactose and fucose. This Oryza sativa subsp. japonica (Rice) protein is Probable xyloglucan glycosyltransferase 3 (CSLC3).